Consider the following 509-residue polypeptide: 2,3-bisphosphoglycerate-independent phosphoglycerate mutase (509 aa).

Position 11 (Asp11) interacts with Mn(2+). Phosphotyrosine is present on Tyr35. Position 61 (Ser61) interacts with Mn(2+). Ser61 functions as the Phosphoserine intermediate in the catalytic mechanism. Substrate is bound by residues His122, 152-153, Arg184, Arg190, 260-263, and Lys335; these read RD and RPDR. Mn(2+) contacts are provided by Asp402, His406, Asp443, His444, and His461.

This sequence belongs to the BPG-independent phosphoglycerate mutase family. Monomer. Mn(2+) is required as a cofactor.

The catalysed reaction is (2R)-2-phosphoglycerate = (2R)-3-phosphoglycerate. The protein operates within carbohydrate degradation; glycolysis; pyruvate from D-glyceraldehyde 3-phosphate: step 3/5. In terms of biological role, essential for rapid growth and for sporulation. Catalyzes the interconversion of 2-phosphoglycerate and 3-phosphoglycerate. The protein is 2,3-bisphosphoglycerate-independent phosphoglycerate mutase of Bacillus cereus (strain ATCC 14579 / DSM 31 / CCUG 7414 / JCM 2152 / NBRC 15305 / NCIMB 9373 / NCTC 2599 / NRRL B-3711).